Consider the following 225-residue polypeptide: Orotate phosphoribosyltransferase (225 aa).

5-phospho-alpha-D-ribose 1-diphosphate is bound by residues arginine 107, lysine 108, lysine 111, and 133 to 141 (EDLTTDGGS). Threonine 137 serves as a coordination point for orotate.

This sequence belongs to the purine/pyrimidine phosphoribosyltransferase family. PyrE subfamily. As to quaternary structure, homodimer. Mg(2+) is required as a cofactor.

It catalyses the reaction orotidine 5'-phosphate + diphosphate = orotate + 5-phospho-alpha-D-ribose 1-diphosphate. It participates in pyrimidine metabolism; UMP biosynthesis via de novo pathway; UMP from orotate: step 1/2. Catalyzes the transfer of a ribosyl phosphate group from 5-phosphoribose 1-diphosphate to orotate, leading to the formation of orotidine monophosphate (OMP). The protein is Orotate phosphoribosyltransferase of Roseobacter denitrificans (strain ATCC 33942 / OCh 114) (Erythrobacter sp. (strain OCh 114)).